Consider the following 282-residue polypeptide: Pantothenate synthetase (282 aa).

Residue 26 to 33 (MGNLHEGH) participates in ATP binding. The Proton donor role is filled by His33. Gln57 lines the (R)-pantoate pocket. Beta-alanine is bound at residue Gln57. Position 144 to 147 (144 to 147 (GKKD)) interacts with ATP. Residue Gln150 participates in (R)-pantoate binding. Residues Ile173 and 181–184 (LSSR) contribute to the ATP site.

It belongs to the pantothenate synthetase family. Homodimer.

It localises to the cytoplasm. It carries out the reaction (R)-pantoate + beta-alanine + ATP = (R)-pantothenate + AMP + diphosphate + H(+). The protein operates within cofactor biosynthesis; (R)-pantothenate biosynthesis; (R)-pantothenate from (R)-pantoate and beta-alanine: step 1/1. Its function is as follows. Catalyzes the condensation of pantoate with beta-alanine in an ATP-dependent reaction via a pantoyl-adenylate intermediate. In Cupriavidus necator (strain ATCC 17699 / DSM 428 / KCTC 22496 / NCIMB 10442 / H16 / Stanier 337) (Ralstonia eutropha), this protein is Pantothenate synthetase.